Consider the following 508-residue polypeptide: Photosystem II CP47 reaction center protein (508 aa).

6 helical membrane passes run 21-36 (SVHIMHTALVSGWAGS), 101-115 (IVFSGLCFLASIWHW), 140-156 (GIHLFLSGVACFGFGAF), 203-218 (IAAGTLGILAGLFHLS), 237-252 (VLSSSIAAVFFAAFIV), and 457-472 (SFALLFFFGHIWHGAR).

This sequence belongs to the PsbB/PsbC family. PsbB subfamily. PSII is composed of 1 copy each of membrane proteins PsbA, PsbB, PsbC, PsbD, PsbE, PsbF, PsbH, PsbI, PsbJ, PsbK, PsbL, PsbM, PsbT, PsbX, PsbY, PsbZ, Psb30/Ycf12, at least 3 peripheral proteins of the oxygen-evolving complex and a large number of cofactors. It forms dimeric complexes. Binds multiple chlorophylls. PSII binds additional chlorophylls, carotenoids and specific lipids. is required as a cofactor.

The protein localises to the plastid. It localises to the chloroplast thylakoid membrane. In terms of biological role, one of the components of the core complex of photosystem II (PSII). It binds chlorophyll and helps catalyze the primary light-induced photochemical processes of PSII. PSII is a light-driven water:plastoquinone oxidoreductase, using light energy to abstract electrons from H(2)O, generating O(2) and a proton gradient subsequently used for ATP formation. This is Photosystem II CP47 reaction center protein from Amborella trichopoda.